Consider the following 337-residue polypeptide: DNA-directed RNA polymerase subunit alpha (337 aa).

Positions 1 to 233 (MVREKVTVST…DLFIPFLHME (233 aa)) are alpha N-terminal domain (alpha-NTD). The segment at 265–337 (KKIALKSIFI…FVIDLAKNKF (73 aa)) is alpha C-terminal domain (alpha-CTD).

It belongs to the RNA polymerase alpha chain family. In plastids the minimal PEP RNA polymerase catalytic core is composed of four subunits: alpha, beta, beta', and beta''. When a (nuclear-encoded) sigma factor is associated with the core the holoenzyme is formed, which can initiate transcription.

The protein localises to the plastid. The protein resides in the chloroplast. The enzyme catalyses RNA(n) + a ribonucleoside 5'-triphosphate = RNA(n+1) + diphosphate. In terms of biological role, DNA-dependent RNA polymerase catalyzes the transcription of DNA into RNA using the four ribonucleoside triphosphates as substrates. In Nicotiana sylvestris (Wood tobacco), this protein is DNA-directed RNA polymerase subunit alpha.